The primary structure comprises 944 residues: UvrABC system protein A (944 aa).

ATP is bound at residue 33–40 (GLSGSGKS). Residues 252 to 279 (CPICGFSIGELEPRMFSFNSPFGACPTC) form a C4-type zinc finger. ABC transporter domains lie at 309–587 (WEPT…KKSL) and 607–935 (ITDR…QYLK). 639–646 (GVSGSGKS) contacts ATP. The segment at 738 to 764 (CEACKGDGIIKIEMHFLPDVYVPCEVC) adopts a C4-type zinc-finger fold.

Belongs to the ABC transporter superfamily. UvrA family. In terms of assembly, forms a heterotetramer with UvrB during the search for lesions.

It localises to the cytoplasm. Its function is as follows. The UvrABC repair system catalyzes the recognition and processing of DNA lesions. UvrA is an ATPase and a DNA-binding protein. A damage recognition complex composed of 2 UvrA and 2 UvrB subunits scans DNA for abnormalities. When the presence of a lesion has been verified by UvrB, the UvrA molecules dissociate. The chain is UvrABC system protein A from Staphylococcus epidermidis (strain ATCC 35984 / DSM 28319 / BCRC 17069 / CCUG 31568 / BM 3577 / RP62A).